A 227-amino-acid chain; its full sequence is Cytochrome c oxidase subunit 2 (227 aa).

Over 1-14 (MAHPVQLGLQDATS) the chain is Mitochondrial intermembrane. Residues 15–45 (PVMEELVTFHDHALMAMFLISFLILYALSAT) traverse the membrane as a helical segment. Residues 46 to 59 (LTTKLTNTNITDAQ) lie on the Mitochondrial matrix side of the membrane. The chain crosses the membrane as a helical span at residues 60–87 (EMETIWTILPAVILVLIALPSLRILYMT). Over 88-227 (DEINNPSFTI…IFEMGPVFTL (140 aa)) the chain is Mitochondrial intermembrane. The Cu cation site is built by His161, Cys196, Glu198, Cys200, His204, and Met207. Position 198 (Glu198) interacts with Mg(2+).

Belongs to the cytochrome c oxidase subunit 2 family. Component of the cytochrome c oxidase (complex IV, CIV), a multisubunit enzyme composed of 14 subunits. The complex is composed of a catalytic core of 3 subunits MT-CO1, MT-CO2 and MT-CO3, encoded in the mitochondrial DNA, and 11 supernumerary subunits COX4I, COX5A, COX5B, COX6A, COX6B, COX6C, COX7A, COX7B, COX7C, COX8 and NDUFA4, which are encoded in the nuclear genome. The complex exists as a monomer or a dimer and forms supercomplexes (SCs) in the inner mitochondrial membrane with NADH-ubiquinone oxidoreductase (complex I, CI) and ubiquinol-cytochrome c oxidoreductase (cytochrome b-c1 complex, complex III, CIII), resulting in different assemblies (supercomplex SCI(1)III(2)IV(1) and megacomplex MCI(2)III(2)IV(2)). Found in a complex with TMEM177, COA6, COX18, COX20, SCO1 and SCO2. Interacts with TMEM177 in a COX20-dependent manner. Interacts with COX20. Interacts with COX16. Cu cation is required as a cofactor.

Its subcellular location is the mitochondrion inner membrane. The catalysed reaction is 4 Fe(II)-[cytochrome c] + O2 + 8 H(+)(in) = 4 Fe(III)-[cytochrome c] + 2 H2O + 4 H(+)(out). Its function is as follows. Component of the cytochrome c oxidase, the last enzyme in the mitochondrial electron transport chain which drives oxidative phosphorylation. The respiratory chain contains 3 multisubunit complexes succinate dehydrogenase (complex II, CII), ubiquinol-cytochrome c oxidoreductase (cytochrome b-c1 complex, complex III, CIII) and cytochrome c oxidase (complex IV, CIV), that cooperate to transfer electrons derived from NADH and succinate to molecular oxygen, creating an electrochemical gradient over the inner membrane that drives transmembrane transport and the ATP synthase. Cytochrome c oxidase is the component of the respiratory chain that catalyzes the reduction of oxygen to water. Electrons originating from reduced cytochrome c in the intermembrane space (IMS) are transferred via the dinuclear copper A center (CU(A)) of subunit 2 and heme A of subunit 1 to the active site in subunit 1, a binuclear center (BNC) formed by heme A3 and copper B (CU(B)). The BNC reduces molecular oxygen to 2 water molecules using 4 electrons from cytochrome c in the IMS and 4 protons from the mitochondrial matrix. The chain is Cytochrome c oxidase subunit 2 (MT-CO2) from Theropithecus gelada (Gelada baboon).